Consider the following 318-residue polypeptide: Acetylglutamate kinase (318 aa).

Residues 80 to 81 (GG), Arg-102, and Asn-203 each bind substrate.

The protein belongs to the acetylglutamate kinase family. ArgB subfamily.

It is found in the cytoplasm. It catalyses the reaction N-acetyl-L-glutamate + ATP = N-acetyl-L-glutamyl 5-phosphate + ADP. The protein operates within amino-acid biosynthesis; L-arginine biosynthesis; N(2)-acetyl-L-ornithine from L-glutamate: step 2/4. Catalyzes the ATP-dependent phosphorylation of N-acetyl-L-glutamate. The chain is Acetylglutamate kinase from Bifidobacterium adolescentis (strain ATCC 15703 / DSM 20083 / NCTC 11814 / E194a).